The following is a 525-amino-acid chain: Membrane-bound lytic murein transglycosylase F (525 aa).

Positions methionine 1–alanine 24 are cleaved as a signal peptide. The interval cysteine 25–isoleucine 284 is non-LT domain. The LT domain stretch occupies residues alanine 286–glutamate 525. Glutamate 329 is a catalytic residue. Positions valine 506 to glutamate 525 are disordered. Positions asparagine 514–glutamate 525 are enriched in acidic residues.

It in the N-terminal section; belongs to the bacterial solute-binding protein 3 family. This sequence in the C-terminal section; belongs to the transglycosylase Slt family.

It localises to the cell outer membrane. The enzyme catalyses Exolytic cleavage of the (1-&gt;4)-beta-glycosidic linkage between N-acetylmuramic acid (MurNAc) and N-acetylglucosamine (GlcNAc) residues in peptidoglycan, from either the reducing or the non-reducing ends of the peptidoglycan chains, with concomitant formation of a 1,6-anhydrobond in the MurNAc residue.. Murein-degrading enzyme that degrades murein glycan strands and insoluble, high-molecular weight murein sacculi, with the concomitant formation of a 1,6-anhydromuramoyl product. Lytic transglycosylases (LTs) play an integral role in the metabolism of the peptidoglycan (PG) sacculus. Their lytic action creates space within the PG sacculus to allow for its expansion as well as for the insertion of various structures such as secretion systems and flagella. In Vibrio parahaemolyticus serotype O3:K6 (strain RIMD 2210633), this protein is Membrane-bound lytic murein transglycosylase F.